Here is a 338-residue protein sequence, read N- to C-terminus: GTPase Obg (338 aa).

An Obg domain is found at 1–159 (MKFLDKAIIH…RILRLELILI (159 aa)). An OBG-type G domain is found at 160–333 (AHVGTLGLPN…IVKKIYDFLK (174 aa)). Residues 166–173 (GLPNSGKS), 191–195 (FTTLK), 213–216 (DIPG), 283–286 (NKID), and 314–316 (SAI) contribute to the GTP site. Positions 173 and 193 each coordinate Mg(2+).

It belongs to the TRAFAC class OBG-HflX-like GTPase superfamily. OBG GTPase family. Monomer. The cofactor is Mg(2+).

It is found in the cytoplasm. In terms of biological role, an essential GTPase which binds GTP, GDP and possibly (p)ppGpp with moderate affinity, with high nucleotide exchange rates and a fairly low GTP hydrolysis rate. Plays a role in control of the cell cycle, stress response, ribosome biogenesis and in those bacteria that undergo differentiation, in morphogenesis control. The sequence is that of GTPase Obg from Buchnera aphidicola subsp. Baizongia pistaciae (strain Bp).